The chain runs to 146 residues: MDQTLTQFGSVFVFLLLGVIFVVGGYLTSRLLRPSRPNPQKNSTYECGEEAIGSAWVKFNIRFYVVALIFIIFDVEVVFLYPWATVFKPLGTFALIEVLVFAGILILGLAYAWVKGDLDWVRPTPNIPKMPPMPELPVAKGASQKD.

Transmembrane regions (helical) follow at residues 8 to 28 (FGSVFVFLLLGVIFVVGGYLT), 63 to 83 (FYVVALIFIIFDVEVVFLYPW), and 93 to 113 (FALIEVLVFAGILILGLAYAW).

The protein belongs to the complex I subunit 3 family. As to quaternary structure, NDH-1 is composed of 14 different subunits. Subunits NuoA, H, J, K, L, M, N constitute the membrane sector of the complex.

The protein localises to the cell inner membrane. It carries out the reaction a quinone + NADH + 5 H(+)(in) = a quinol + NAD(+) + 4 H(+)(out). Functionally, NDH-1 shuttles electrons from NADH, via FMN and iron-sulfur (Fe-S) centers, to quinones in the respiratory chain. The immediate electron acceptor for the enzyme in this species is believed to be a menaquinone. Couples the redox reaction to proton translocation (for every two electrons transferred, four hydrogen ions are translocated across the cytoplasmic membrane), and thus conserves the redox energy in a proton gradient. The protein is NADH-quinone oxidoreductase subunit A of Chlorobium chlorochromatii (strain CaD3).